The following is a 248-amino-acid chain: 3-deoxy-manno-octulosonate cytidylyltransferase (248 aa).

The protein belongs to the KdsB family.

It localises to the cytoplasm. The enzyme catalyses 3-deoxy-alpha-D-manno-oct-2-ulosonate + CTP = CMP-3-deoxy-beta-D-manno-octulosonate + diphosphate. Its pathway is nucleotide-sugar biosynthesis; CMP-3-deoxy-D-manno-octulosonate biosynthesis; CMP-3-deoxy-D-manno-octulosonate from 3-deoxy-D-manno-octulosonate and CTP: step 1/1. It functions in the pathway bacterial outer membrane biogenesis; lipopolysaccharide biosynthesis. Activates KDO (a required 8-carbon sugar) for incorporation into bacterial lipopolysaccharide in Gram-negative bacteria. This is 3-deoxy-manno-octulosonate cytidylyltransferase from Citrobacter koseri (strain ATCC BAA-895 / CDC 4225-83 / SGSC4696).